The sequence spans 117 residues: Large ribosomal subunit protein uL18 (117 aa).

Belongs to the universal ribosomal protein uL18 family. Part of the 50S ribosomal subunit; part of the 5S rRNA/L5/L18/L25 subcomplex. Contacts the 5S and 23S rRNAs.

Its function is as follows. This is one of the proteins that bind and probably mediate the attachment of the 5S RNA into the large ribosomal subunit, where it forms part of the central protuberance. The sequence is that of Large ribosomal subunit protein uL18 from Leuconostoc citreum (strain KM20).